The following is a 406-amino-acid chain: Cysteine desulfurase (406 aa).

Lys-226 is modified (N6-(pyridoxal phosphate)lysine). The Cysteine persulfide intermediate role is filled by Cys-364.

It belongs to the class-V pyridoxal-phosphate-dependent aminotransferase family. Csd subfamily. As to quaternary structure, homodimer. Interacts with SufE and the SufBCD complex composed of SufB, SufC and SufD. The interaction with SufE is required to mediate the direct transfer of the sulfur atom from the S-sulfanylcysteine. Pyridoxal 5'-phosphate is required as a cofactor.

The protein localises to the cytoplasm. It carries out the reaction (sulfur carrier)-H + L-cysteine = (sulfur carrier)-SH + L-alanine. It catalyses the reaction L-selenocysteine + AH2 = hydrogenselenide + L-alanine + A + H(+). It functions in the pathway cofactor biosynthesis; iron-sulfur cluster biosynthesis. Functionally, cysteine desulfurases mobilize the sulfur from L-cysteine to yield L-alanine, an essential step in sulfur metabolism for biosynthesis of a variety of sulfur-containing biomolecules. Component of the suf operon, which is activated and required under specific conditions such as oxidative stress and iron limitation. Acts as a potent selenocysteine lyase in vitro, that mobilizes selenium from L-selenocysteine. Selenocysteine lyase activity is however unsure in vivo. This chain is Cysteine desulfurase, found in Salmonella choleraesuis (strain SC-B67).